The chain runs to 515 residues: Maturase K (515 aa).

Belongs to the intron maturase 2 family. MatK subfamily.

It localises to the plastid. The protein localises to the chloroplast. Usually encoded in the trnK tRNA gene intron. Probably assists in splicing its own and other chloroplast group II introns. The chain is Maturase K from Alpinia calcarata (Snap ginger).